A 575-amino-acid chain; its full sequence is Thiol:disulfide interchange protein DsbD (575 aa).

Positions 1–24 are cleaved as a signal peptide; sequence MIKRTLMLFLLLCSPLLTPAAANA. 2 disulfides stabilise this stretch: C126–C132 and C192–C314. The next 8 helical transmembrane spans lie at 180 to 200, 216 to 236, 253 to 273, 297 to 317, 336 to 356, 367 to 387, 394 to 414, and 425 to 445; these read AILI…YPLI, IFWL…LLGL, YVLI…FGLY, LFGV…CTTA, GLTL…VTLF, WMQY…VFLL, AWGI…GFVL, and VIQL…QDWF. The region spanning 444–575 is the Thioredoxin domain; it reads WFWGTTVTQQ…FNEHLQHLPK (132 aa). The cysteines at positions 490 and 493 are disulfide-linked.

The protein belongs to the thioredoxin family. DsbD subfamily.

It is found in the cell inner membrane. The enzyme catalyses [protein]-dithiol + NAD(+) = [protein]-disulfide + NADH + H(+). The catalysed reaction is [protein]-dithiol + NADP(+) = [protein]-disulfide + NADPH + H(+). Required to facilitate the formation of correct disulfide bonds in some periplasmic proteins and for the assembly of the periplasmic c-type cytochromes. Acts by transferring electrons from cytoplasmic thioredoxin to the periplasm. This transfer involves a cascade of disulfide bond formation and reduction steps. This is Thiol:disulfide interchange protein DsbD from Photorhabdus laumondii subsp. laumondii (strain DSM 15139 / CIP 105565 / TT01) (Photorhabdus luminescens subsp. laumondii).